The chain runs to 2348 residues: Transcription factor HIVEP3 (2348 aa).

The tract at residues 1 to 105 is disordered; that stretch reads MDPDQSIKGT…AFMSPGKPEH (105 aa). The segment covering 27-72 has biased composition (polar residues); it reads IQTSVSSSAPYPGSGTTAPSESATQELLATQPFSGPSQEKTGQQQK. C2H2-type zinc fingers lie at residues 185–207 and 213–235; these read YICQYCSRPCAKPSVLQKHIRSH and YPCGPCGFSFKTKSNLYKHRKSH. The tract at residues 185 to 235 is ZAS1; sequence YICQYCSRPCAKPSVLQKHIRSHTGERPYPCGPCGFSFKTKSNLYKHRKSH. The interval 204–1055 is no DNA binding activity or transactivation activity, but complete prevention of TRAF-dependent NF-Kappa-B activation; associates with TRAF2 and JUN; the sequence is IRSHTGERPY…KGKQESSEEP (852 aa). 3 disordered regions span residues 239 to 401, 475 to 532, and 561 to 628; these read IKAG…SPPN, DSVK…PLLR, and ADPE…TKKG. An acidic 1 region spans residues 257–280; the sequence is EMERIPGEEFEEPTEGESTDSEEE. Positions 264–281 are enriched in acidic residues; the sequence is EEFEEPTEGESTDSEEET. A compositionally biased stretch (low complexity) spans 298–323; sequence PLLSSSLYSSGSHGSSQERCSLSQSS. Residues 338–352 are compositionally biased toward basic and acidic residues; it reads SSEHPLSHKPEDTHT. Polar residues-rich tracts occupy residues 372-401 and 485-495; these read TFLSPGSKGSTESGYFSRSESAEQQVSPPN and TRRSSVESPKS. Composition is skewed to low complexity over residues 513–527 and 589–605; these read QSLLSLQHPPSSTHP and PLGGEYSSEEPGPSSKD. Basic and acidic residues predominate over residues 606-623; that stretch reads PTSKPSDEPEPKESDLTK. The CCHC HIVEP-type zinc finger occupies 633–663; that stretch reads GANYECTICGARYKKRDNYEAHKKYYCSELQ. Disordered stretches follow at residues 692–1098, 1229–1274, 1386–1427, 1441–1555, and 1654–1694; these read KLGA…PPYT, LPPV…TSAP, EGCS…KADE, STED…EGTD, and EVHL…GEPA. A compositionally biased stretch (low complexity) spans 736–749; the sequence is STKSPAEASKSAPS. An acidic 2 region spans residues 844–865; that stretch reads EEPDRPDTEPEPPPKEPEKTEE. Basic and acidic residues predominate over residues 845 to 865; the sequence is EPDRPDTEPEPPPKEPEKTEE. Positions 885–891 match the Nuclear localization signal motif; sequence PKKKRLR. Low complexity predominate over residues 893 to 929; the sequence is AEMAQSSGESSFESSVPLSRSPSQESSISLSGSSRSA. A compositionally biased stretch (basic and acidic residues) spans 930–939; it reads SFDREDHGKA. 3 stretches are compositionally biased toward polar residues: residues 975 to 985, 1062 to 1073, and 1247 to 1256; these read SEQSPNVPHSS, TKSSVPQISVGT, and SSSTEYSSDI. Positions 1409 to 1433 form a coiled coil; that stretch reads METQQQKRVKEEEASKADEKLELVS. Composition is skewed to basic and acidic residues over residues 1416–1427, 1442–1452, and 1518–1527; these read RVKEEEASKADE, TEDRKKTEKPH, and VKKEDPKEQT. Positions 1538 to 1547 are enriched in low complexity; that stretch reads LPLSDTSPKP. Residues 1665–1694 are compositionally biased toward basic and acidic residues; it reads SQKDPARVEKEEKQGKAEEGTPTSKRGEPA. 2 consecutive C2H2-type zinc fingers follow at residues 1720 to 1742 and 1748 to 1772; these read YVCEECGIRCKKPSMLKKHIRTH and YVCKHCHFAFKTKGNLTKHMKSKAH. The ZAS2 stretch occupies residues 1720–1772; it reads YVCEECGIRCKKPSMLKKHIRTHTDVRPYVCKHCHFAFKTKGNLTKHMKSKAH. The interval 1783–1841 is acidic 3; sequence EELEAEEGTSDDLHQDSEGQEGAEAVEEHQFSDLEDSDSDSDLDEDEEEEEEEEESQDE. Disordered stretches follow at residues 1786–1990 and 2009–2038; these read EAEE…HLCG and PAGLERATDTGTPRYSPTRRWSLGQAESPP. Acidic residues predominate over residues 1815-1840; that stretch reads DLEDSDSDSDLDEDEEEEEEEEESQD. A compositionally biased stretch (polar residues) spans 1871–1902; the sequence is PDSTSDEVPQGSSISEATHLTASSCSTPSRGT. 5 tandem repeats follow at residues 1897 to 1900, 1927 to 1930, 1933 to 1936, 1961 to 1964, and 2024 to 2027. A compositionally biased stretch (polar residues) spans 1952–1961; that stretch reads KNDSSPQQCS. The segment at 2053 to 2148 is 5 X 4 AA tandem repeats of [ST]-P-X-[RK]; sequence SPSADKSGLG…QLLSRAPCPL (96 aa). Disordered stretches follow at residues 2184–2265 and 2284–2348; these read SDLT…QGHQ and KASS…PPSI. Low complexity predominate over residues 2203–2216; it reads SPSASVSPVAKVSK. Residues 2293–2314 show a composition bias toward polar residues; that stretch reads RSSSMDCLAETSTYSPPRSRNL.

Interacts with TRAF1 and TRAF2 as well as with JUN. Forms a multimeric complex with RUNX2 and E3 ubiquitin ligase WWP1. Phosphorylated on threonine and serine residues. Phosphorylation by cyclin-dependent kinase CDK1 decreases HIVEP3 DNA binding affinity, and by epidermal growth factor receptor kinase increases its DNA binding affinity. In terms of tissue distribution, expressed in macrophages, lymphocytes, brain, thymus, spleen and bone marrow. Expressed in osteoblasts, whole bone and, to a lesser extent, in osteoclasts.

The protein localises to the cytoplasm. It localises to the nucleus. Plays a role of transcription factor; binds to recognition signal sequences (Rss heptamer) for somatic recombination of immunoglobulin and T-cell receptor gene segments; Also binds to the kappa-B motif of gene such as S100A4, involved in cell progression and differentiation. Kappa-B motif is a gene regulatory element found in promoters and enhancers of genes involved in immunity, inflammation, and growth and that responds to viral antigens, mitogens, and cytokines. Involvement of HIVEP3 in cell growth is strengthened by the fact that its down-regulation promotes cell cycle progression with ultimate formation of multinucleated giant cells. Strongly inhibits TNF-alpha-induced NF-kappa-B activation; Interferes with nuclear factor NF-kappa-B by several mechanisms: as transcription factor, by competing for Kappa-B motif and by repressing transcription in the nucleus; through a non transcriptional process, by inhibiting nuclear translocation of RELA by association with TRAF2, an adapter molecule in the tumor necrosis factor signaling, which blocks the formation of IKK complex. Interaction with TRAF proteins inhibits both NF-Kappa-B-mediated and c-Jun N-terminal kinase/JNK-mediated responses that include apoptosis and pro-inflammatory cytokine gene expression. Positively regulates the expression of IL2 in T-cell. Essential regulator of adult bone formation. The protein is Transcription factor HIVEP3 (Hivep3) of Mus musculus (Mouse).